The sequence spans 256 residues: 5'-nucleotidase SurE (256 aa).

Positions 8, 9, 42, and 94 each coordinate a divalent metal cation.

It belongs to the SurE nucleotidase family. A divalent metal cation serves as cofactor.

The protein localises to the cytoplasm. It catalyses the reaction a ribonucleoside 5'-phosphate + H2O = a ribonucleoside + phosphate. Nucleotidase that shows phosphatase activity on nucleoside 5'-monophosphates. The protein is 5'-nucleotidase SurE of Ehrlichia chaffeensis (strain ATCC CRL-10679 / Arkansas).